The following is a 235-amino-acid chain: Phosphoribosylaminoimidazole-succinocarboxamide synthase (235 aa).

It belongs to the SAICAR synthetase family.

It carries out the reaction 5-amino-1-(5-phospho-D-ribosyl)imidazole-4-carboxylate + L-aspartate + ATP = (2S)-2-[5-amino-1-(5-phospho-beta-D-ribosyl)imidazole-4-carboxamido]succinate + ADP + phosphate + 2 H(+). Its pathway is purine metabolism; IMP biosynthesis via de novo pathway; 5-amino-1-(5-phospho-D-ribosyl)imidazole-4-carboxamide from 5-amino-1-(5-phospho-D-ribosyl)imidazole-4-carboxylate: step 1/2. The sequence is that of Phosphoribosylaminoimidazole-succinocarboxamide synthase from Chloroherpeton thalassium (strain ATCC 35110 / GB-78).